Here is a 289-residue protein sequence, read N- to C-terminus: tRNA dimethylallyltransferase (289 aa).

Residue 9–16 (GTTASGKT) coordinates ATP. Position 11-16 (11-16 (TASGKT)) interacts with substrate. The interval 34–37 (DSLC) is interaction with substrate tRNA.

It belongs to the IPP transferase family. Monomer. The cofactor is Mg(2+).

The catalysed reaction is adenosine(37) in tRNA + dimethylallyl diphosphate = N(6)-dimethylallyladenosine(37) in tRNA + diphosphate. Its function is as follows. Catalyzes the transfer of a dimethylallyl group onto the adenine at position 37 in tRNAs that read codons beginning with uridine, leading to the formation of N6-(dimethylallyl)adenosine (i(6)A). In Campylobacter jejuni (strain RM1221), this protein is tRNA dimethylallyltransferase.